A 73-amino-acid chain; its full sequence is Large ribosomal subunit protein bL31 (73 aa).

Cys16, Cys18, Cys37, and Cys40 together coordinate Zn(2+).

The protein belongs to the bacterial ribosomal protein bL31 family. Type A subfamily. In terms of assembly, part of the 50S ribosomal subunit. Zn(2+) serves as cofactor.

Binds the 23S rRNA. In Pseudomonas fluorescens (strain ATCC BAA-477 / NRRL B-23932 / Pf-5), this protein is Large ribosomal subunit protein bL31.